A 329-amino-acid chain; its full sequence is Homeobox protein ceh-40 (329 aa).

The PBC domain maps to 3 to 186 (EASKSIMDLL…VIQLKKRYLD (184 aa)). The tract at residues 10–90 (DLLSEVVKIT…EGVAGPDDSL (81 aa)) is PBC-A. Residues 93 to 186 (IQEAAGTDQY…VIQLKKRYLD (94 aa)) are PBC-B. The segment at residues 187–249 (ARRKRRNFSK…NKRIRYKKTM (63 aa)) is a DNA-binding region (homeobox; TALE-type). Residues 248–275 (TMAKNEDERRENRKPEDRPPPGAPGAPY) form a disordered region. Residues 250–266 (AKNEDERRENRKPEDRP) are compositionally biased toward basic and acidic residues.

The protein belongs to the TALE/PBX homeobox family. In terms of tissue distribution, expressed in head dopaminergic neurons.

The protein resides in the nucleus. Plays a role in regulating gene expression in dopaminergic neurons, acting redundantly with homeobox protein ceh-20 in head neurons. May activate dopamine pathway genes in concert with ETS domain-containing protein ast-1, and homeobox proteins ceh-43 and ceh-20. The polypeptide is Homeobox protein ceh-40 (ceh-40) (Caenorhabditis elegans).